Here is a 274-residue protein sequence, read N- to C-terminus: Triosephosphate isomerase (274 aa).

31-33 (NWK) is a substrate binding site. His118 acts as the Electrophile in catalysis. The active-site Proton acceptor is Glu188. Substrate-binding positions include Gly194, Ser234, and 255 to 256 (GG).

It belongs to the triosephosphate isomerase family. As to quaternary structure, homodimer.

The protein localises to the cytoplasm. The catalysed reaction is D-glyceraldehyde 3-phosphate = dihydroxyacetone phosphate. Its pathway is carbohydrate biosynthesis; gluconeogenesis. It functions in the pathway carbohydrate degradation; glycolysis; D-glyceraldehyde 3-phosphate from glycerone phosphate: step 1/1. Its function is as follows. Involved in the gluconeogenesis. Catalyzes stereospecifically the conversion of dihydroxyacetone phosphate (DHAP) to D-glyceraldehyde-3-phosphate (G3P). This chain is Triosephosphate isomerase, found in Chlamydia trachomatis serovar A (strain ATCC VR-571B / DSM 19440 / HAR-13).